Reading from the N-terminus, the 357-residue chain is Protein BMRF2 (357 aa).

The Virion surface segment spans residues 1–11 (MFSCKQHLSLG). A transmembrane helix spans residues 12–32 (ACVFCLGLLASTPFIWCFVFA). Residues 33–46 (NLLSLEIFSPWQTH) lie on the Intravirion side of the membrane. Over 47 to 67 (VYRLGFPTACLMAVLWTLVPA) the chain traverses the membrane. At 68-70 (KHA) the chain is on the virion surface side. A transmembrane span lies at residues 71-91 (VRAVTPAIMLNIASALIFFSL). Residues 92–98 (RVYSTST) are Intravirion-facing. The hydrophobic stretch at 99-121 (WVSAPCLFLANLPLLCLWPRLAI) threads the membrane. Over 122-133 (EIVYICPAIHQR) the chain is Virion surface. A transmembrane span lies at residues 134-154 (FFELGLLLACTIFALSVVSRA). Residues 155-158 (LEVS) lie on the Intravirion side of the membrane. A transmembrane span lies at residues 159-179 (AVFMSPFFIFLALGSGSLAGA). The Virion surface segment spans residues 180–217 (RRNQIYTSGLERRRSIFCARGDHSVASLKETLHKCPWD). The Integrin binding site signature appears at 199–201 (RGD). Positions 218–238 (LLAISALTVLVVCVMIVLHVH) form a transmembrane segment. Residues 239–240 (AE) are Intravirion-facing. At 241–261 (VFFGLSRYLPLFLCGAMASGG) the chain is embedded in the membrane. At 262–267 (LYLGHS) the chain is on the virion surface side. The chain crosses the lipid bilayer at residues 268-288 (SIIACVMATLCTLSSVVVYFL). The Intravirion portion of the chain corresponds to 289–298 (HETLGPLGKT). A transmembrane helix spans residues 299–319 (VLFISIFVYYFSGVAALSAAM). At 320–335 (RYKLKKFVNGPLVHLR) the chain is on the virion surface side. The chain crosses the lipid bilayer at residues 336-356 (VVYMCCFVFTFCEYLLVTFIK). Position 357 (S357) is a topological domain, intravirion.

This sequence belongs to the herpesviridae BMRF2 family. Interacts with BDLF2. Interacts with host beta1 integrin family. Extensively glycosylated by O-linked oligosaccharides.

Its subcellular location is the virion membrane. The protein localises to the host cell membrane. Functionally, facilitates virus attachment to oral epithelial cells by binding to host beta1 integrin family. Participates in rearrangement of cellular actin to increase intercellular contacts by binding BDLF2 and thereby promote virus cell-to-cell spreading. This is Protein BMRF2 from Homo sapiens (Human).